We begin with the raw amino-acid sequence, 239 residues long: DNA repair protein RecO (239 aa).

This sequence belongs to the RecO family.

Involved in DNA repair and RecF pathway recombination. This is DNA repair protein RecO from Tolumonas auensis (strain DSM 9187 / NBRC 110442 / TA 4).